The sequence spans 1396 residues: DNA ligase 6 (1396 aa).

Disordered regions lie at residues 441–464 and 562–599; these read KNAC…DTTP and MNLT…GPGQ. 2 short sequence motifs (nuclear localization signal) span residues 572–579 and 886–893; these read GKRGKSSG and LRKISVQT. Glutamate 1037 provides a ligand contact to ATP. Lysine 1039 serves as the catalytic N6-AMP-lysine intermediate. 4 residues coordinate ATP: arginine 1044, arginine 1060, glutamate 1092, and phenylalanine 1136. Glutamate 1092 is a Mg(2+) binding site. Residue glutamate 1207 coordinates Mg(2+). ATP is bound by residues lysine 1212, arginine 1225, and lysine 1231.

It belongs to the ATP-dependent DNA ligase family. Mg(2+) serves as cofactor. In terms of tissue distribution, mostly expressed in buds and flowers, and, to a lower extent, in stems, leaves, siliques and seeds.

It localises to the nucleus. It catalyses the reaction ATP + (deoxyribonucleotide)n-3'-hydroxyl + 5'-phospho-(deoxyribonucleotide)m = (deoxyribonucleotide)n+m + AMP + diphosphate.. In terms of biological role, DNA ligase that seals nicks in double-stranded DNA during DNA replication, DNA recombination and DNA repair. Required to maintain seed viability (e.g. longevity and storability) and during seed germination, probably by repairing DNA damage accumulated during seed development, storage and/or imbibition. Facilitates seed germination in cold conditions (2 degrees Celsius) and under oxidative stress (e.g. menadione, a genotoxic agent). Involved in repair of X-ray-induced damage. Limits stable root transformation by A.tumefaciens T-DNA. In Arabidopsis thaliana (Mouse-ear cress), this protein is DNA ligase 6.